A 144-amino-acid chain; its full sequence is Macromomycin (144 aa).

Residues 1–32 (MLQNTSRFLARAGATVGVAAGLAFSLPADRDG) form the signal peptide. Cystine bridges form between C68/C78 and C120/C125.

The protein belongs to the neocarzinostatin family.

Functionally, binds non-covalently to a chromophore which is the cytotoxic and mutagenic component of the antibiotic. The chromophore binds to DNA as a weak intercalator and causes single- and double-strand breaks. This Streptomyces macromomyceticus protein is Macromomycin.